The following is a 299-amino-acid chain: Recombination-associated protein RdgC (299 aa).

Belongs to the RdgC family.

It is found in the cytoplasm. The protein resides in the nucleoid. Functionally, may be involved in recombination. The polypeptide is Recombination-associated protein RdgC (Cupriavidus pinatubonensis (strain JMP 134 / LMG 1197) (Cupriavidus necator (strain JMP 134))).